Here is a 490-residue protein sequence, read N- to C-terminus: GTPase Der (490 aa).

EngA-type G domains are found at residues 3–166 and 203–376; these read PVVA…MDDV and IKLA…DSST. Residues 9-16, 56-60, 118-121, 209-216, 256-260, and 321-324 contribute to the GTP site; these read GRPNVGKS, DTGGI, NKTD, DTAGV, and NKWD. The 85-residue stretch at 377–461 folds into the KH-like domain; sequence RRVSTAMLTR…PIRIQFKEGE (85 aa).

This sequence belongs to the TRAFAC class TrmE-Era-EngA-EngB-Septin-like GTPase superfamily. EngA (Der) GTPase family. Associates with the 50S ribosomal subunit.

In terms of biological role, GTPase that plays an essential role in the late steps of ribosome biogenesis. The chain is GTPase Der from Salmonella typhi.